Here is a 312-residue protein sequence, read N- to C-terminus: Holliday junction branch migration complex subunit RuvB (312 aa).

The segment at 1–168 is large ATPase domain (RuvB-L); sequence MKTNYEFRPQ…FGHIFHLNEY (168 aa). Residues arginine 8, glycine 49, lysine 52, threonine 53, threonine 54, 115–117, arginine 158, tyrosine 168, and arginine 206 each bind ATP; that span reads EDF. Threonine 53 provides a ligand contact to Mg(2+). Residues 169 to 234 form a small ATPAse domain (RuvB-S) region; that stretch reads EPSEISAIIL…DIKNIFKKIQ (66 aa). A head domain (RuvB-H) region spans residues 237-312; it reads EFGLDEQDIN…DFLKNNQLIK (76 aa). The DNA site is built by lysine 290 and arginine 295.

Belongs to the RuvB family. As to quaternary structure, homohexamer. Forms an RuvA(8)-RuvB(12)-Holliday junction (HJ) complex. HJ DNA is sandwiched between 2 RuvA tetramers; dsDNA enters through RuvA and exits via RuvB. An RuvB hexamer assembles on each DNA strand where it exits the tetramer. Each RuvB hexamer is contacted by two RuvA subunits (via domain III) on 2 adjacent RuvB subunits; this complex drives branch migration. In the full resolvosome a probable DNA-RuvA(4)-RuvB(12)-RuvC(2) complex forms which resolves the HJ.

It localises to the cytoplasm. The catalysed reaction is ATP + H2O = ADP + phosphate + H(+). The RuvA-RuvB-RuvC complex processes Holliday junction (HJ) DNA during genetic recombination and DNA repair, while the RuvA-RuvB complex plays an important role in the rescue of blocked DNA replication forks via replication fork reversal (RFR). RuvA specifically binds to HJ cruciform DNA, conferring on it an open structure. The RuvB hexamer acts as an ATP-dependent pump, pulling dsDNA into and through the RuvAB complex. RuvB forms 2 homohexamers on either side of HJ DNA bound by 1 or 2 RuvA tetramers; 4 subunits per hexamer contact DNA at a time. Coordinated motions by a converter formed by DNA-disengaged RuvB subunits stimulates ATP hydrolysis and nucleotide exchange. Immobilization of the converter enables RuvB to convert the ATP-contained energy into a lever motion, pulling 2 nucleotides of DNA out of the RuvA tetramer per ATP hydrolyzed, thus driving DNA branch migration. The RuvB motors rotate together with the DNA substrate, which together with the progressing nucleotide cycle form the mechanistic basis for DNA recombination by continuous HJ branch migration. Branch migration allows RuvC to scan DNA until it finds its consensus sequence, where it cleaves and resolves cruciform DNA. This is Holliday junction branch migration complex subunit RuvB from Ureaplasma parvum serovar 3 (strain ATCC 27815 / 27 / NCTC 11736).